Consider the following 33-residue polypeptide: Photosystem II reaction center protein Psb30 (33 aa).

A helical transmembrane segment spans residues 5-25; that stretch reads VIAQLASLALIIVLGPLVIGL.

Belongs to the Psb30/Ycf12 family. PSII is composed of 1 copy each of membrane proteins PsbA, PsbB, PsbC, PsbD, PsbE, PsbF, PsbH, PsbI, PsbJ, PsbK, PsbL, PsbM, PsbT, PsbX, PsbY, PsbZ, Psb30/Ycf12, peripheral proteins of the oxygen-evolving complex and a large number of cofactors. It forms dimeric complexes.

It localises to the plastid. It is found in the chloroplast thylakoid membrane. A core subunit of photosystem II (PSII), probably helps stabilize the reaction center. In Chara vulgaris (Common stonewort), this protein is Photosystem II reaction center protein Psb30.